The chain runs to 547 residues: Chaperonin GroEL (547 aa).

ATP-binding positions include 30–33 (TLGP), lysine 51, 87–91 (DGTTT), glycine 415, 479–481 (NAA), and aspartate 495. A disordered region spans residues 525-547 (PKEDSPGAGAGMGGMGGMGGMDM). Residues 532-547 (AGAGMGGMGGMGGMDM) are compositionally biased toward gly residues.

This sequence belongs to the chaperonin (HSP60) family. In terms of assembly, forms a cylinder of 14 subunits composed of two heptameric rings stacked back-to-back. Interacts with the co-chaperonin GroES.

It localises to the cytoplasm. The catalysed reaction is ATP + H2O + a folded polypeptide = ADP + phosphate + an unfolded polypeptide.. Functionally, together with its co-chaperonin GroES, plays an essential role in assisting protein folding. The GroEL-GroES system forms a nano-cage that allows encapsulation of the non-native substrate proteins and provides a physical environment optimized to promote and accelerate protein folding. In Nitrosomonas europaea (strain ATCC 19718 / CIP 103999 / KCTC 2705 / NBRC 14298), this protein is Chaperonin GroEL.